We begin with the raw amino-acid sequence, 64 residues long: Small ribosomal subunit protein bS21 (64 aa).

It belongs to the bacterial ribosomal protein bS21 family.

This is Small ribosomal subunit protein bS21 from Flavobacterium johnsoniae (strain ATCC 17061 / DSM 2064 / JCM 8514 / BCRC 14874 / CCUG 350202 / NBRC 14942 / NCIMB 11054 / UW101) (Cytophaga johnsonae).